Here is a 487-residue protein sequence, read N- to C-terminus: Protein nucleotidyltransferase YdiU (487 aa).

ATP contacts are provided by Gly90, Gly92, Arg93, Lys113, Asp125, Gly126, Arg176, and Arg183. Asp252 functions as the Proton acceptor in the catalytic mechanism. Asn253 and Asp262 together coordinate Mg(2+). Asp262 provides a ligand contact to ATP.

It belongs to the SELO family. Mg(2+) is required as a cofactor. It depends on Mn(2+) as a cofactor.

The catalysed reaction is L-seryl-[protein] + ATP = 3-O-(5'-adenylyl)-L-seryl-[protein] + diphosphate. It carries out the reaction L-threonyl-[protein] + ATP = 3-O-(5'-adenylyl)-L-threonyl-[protein] + diphosphate. It catalyses the reaction L-tyrosyl-[protein] + ATP = O-(5'-adenylyl)-L-tyrosyl-[protein] + diphosphate. The enzyme catalyses L-histidyl-[protein] + UTP = N(tele)-(5'-uridylyl)-L-histidyl-[protein] + diphosphate. The catalysed reaction is L-seryl-[protein] + UTP = O-(5'-uridylyl)-L-seryl-[protein] + diphosphate. It carries out the reaction L-tyrosyl-[protein] + UTP = O-(5'-uridylyl)-L-tyrosyl-[protein] + diphosphate. In terms of biological role, nucleotidyltransferase involved in the post-translational modification of proteins. It can catalyze the addition of adenosine monophosphate (AMP) or uridine monophosphate (UMP) to a protein, resulting in modifications known as AMPylation and UMPylation. The protein is Protein nucleotidyltransferase YdiU of Pseudomonas syringae pv. tomato (strain ATCC BAA-871 / DC3000).